An 823-amino-acid chain; its full sequence is Putative E3 ubiquitin-protein ligase RF4 (823 aa).

Disordered stretches follow at residues Thr24–Val72, Ser224–Ser291, and Glu432–Lys464. Over residues Lys61–Val72 the composition is skewed to polar residues. Low complexity predominate over residues Ser224 to Lys240. Over residues Phe267 to Thr282 the composition is skewed to polar residues. Positions Ser453–Lys464 are enriched in basic and acidic residues. The stretch at Glu536–Arg738 forms a coiled coil. Residues Cys768–Arg808 form an RING-type zinc finger.

Belongs to the RING-type zinc finger family.

It carries out the reaction S-ubiquitinyl-[E2 ubiquitin-conjugating enzyme]-L-cysteine + [acceptor protein]-L-lysine = [E2 ubiquitin-conjugating enzyme]-L-cysteine + N(6)-ubiquitinyl-[acceptor protein]-L-lysine.. It functions in the pathway protein modification; protein ubiquitination. This is Putative E3 ubiquitin-protein ligase RF4 (RF4) from Arabidopsis thaliana (Mouse-ear cress).